Here is a 135-residue protein sequence, read N- to C-terminus: Succinate dehydrogenase assembly factor 3, mitochondrial (135 aa).

The segment at 73-101 (KENSNNNDNYNNNNNDNNNDNNNFINIGQ) is disordered. The span at 75–95 (NSNNNDNYNNNNNDNNNDNNN) shows a compositional bias: low complexity.

It belongs to the complex I LYR family. SDHAF3 subfamily. As to quaternary structure, interacts with the iron-sulfur protein subunit within the SDH catalytic dimer.

The protein resides in the mitochondrion matrix. Functionally, plays an essential role in the assembly of succinate dehydrogenase (SDH), an enzyme complex (also referred to as respiratory complex II) that is a component of both the tricarboxylic acid (TCA) cycle and the mitochondrial electron transport chain, and which couples the oxidation of succinate to fumarate with the reduction of ubiquinone (coenzyme Q) to ubiquinol. Promotes maturation of the iron-sulfur protein subunit of the SDH catalytic dimer, protecting it from the deleterious effects of oxidants. May act together with SDHAF1. The chain is Succinate dehydrogenase assembly factor 3, mitochondrial (acn9) from Dictyostelium discoideum (Social amoeba).